The sequence spans 402 residues: Nodal homolog 4-A (402 aa).

Positions Met1–Ser18 are cleaved as a signal peptide. Residues Leu19–Arg278 constitute a propeptide that is removed on maturation. Asn37, Asn238, and Asn340 each carry an N-linked (GlcNAc...) asparagine glycan. 3 disulfides stabilise this stretch: Cys302/Cys368, Cys331/Cys399, and Cys335/Cys401.

This sequence belongs to the TGF-beta family. As to quaternary structure, homodimer; disulfide-linked. As to expression, during blastula stages, expressed in the endoderm at a higher level dorsally than ventrally. Expressed in the deep cells of the Spemann organizer at the gastrula stage. Expressed in the notochord (a derivative of the organizer) and neural tube during the neural stages.

The protein resides in the secreted. In terms of biological role, cooperation and regulatory loops of multiple nodals are essential for mesendoderm patterning in early embryos. Plays a role in mesoderm formation and may be required for neural development. The sequence is that of Nodal homolog 4-A (nodal4-a) from Xenopus laevis (African clawed frog).